The sequence spans 461 residues: Zinc transporter 6 (461 aa).

Residues methionine 1 to lysine 33 are Cytoplasmic-facing. The chain crosses the membrane as a helical span at residues isoleucine 34–serine 54. At threonine 55 to threonine 64 the chain is on the extracellular side. The helical transmembrane segment at tyrosine 65–leucine 85 threads the bilayer. Over arginine 86 to arginine 98 the chain is Cytoplasmic. A helical transmembrane segment spans residues leucine 99–leucine 119. Over lysine 120–threonine 134 the chain is Extracellular. Residues glycine 135–isoleucine 155 form a helical membrane-spanning segment. The Cytoplasmic portion of the chain corresponds to arginine 156–proline 200. The helical transmembrane segment at phenylalanine 201–isoleucine 221 threads the bilayer. The Extracellular portion of the chain corresponds to asparagine 222–asparagine 223. A helical membrane pass occupies residues tyrosine 224 to tyrosine 244. The Cytoplasmic segment spans residues proline 245 to proline 461. Residues asparagine 371 to proline 392 are disordered.

The protein belongs to the cation diffusion facilitator (CDF) transporter (TC 2.A.4) family. SLC30A subfamily. As to quaternary structure, heterodimer with SLC30A5; form a functional zinc ion transmembrane transporter. Expressed in brain; especially in cerebellum, hippocampus, parahippocampal gyrus, superior and middle temporal gyrus. Also expressed in B-cells, colon, eye, and lung. Lower expression was present in bone, brain, cervix, ear, heart, kidney, muscle, nerve, pancreas, prostate, skin, stomach, and testis.

It localises to the golgi apparatus. It is found in the trans-Golgi network membrane. Its function is as follows. Has probably no intrinsic transporter activity but together with SLC30A5 forms a functional zinc ion:proton antiporter heterodimer, mediating zinc entry into the lumen of organelles along the secretory pathway. As part of that zinc ion:proton antiporter, contributes to zinc ion homeostasis within the early secretory pathway and regulates the activation and folding of enzymes like alkaline phosphatases and enzymes involved in phosphatidylinositol glycan anchor biosynthesis. The sequence is that of Zinc transporter 6 from Homo sapiens (Human).